Here is a 202-residue protein sequence, read N- to C-terminus: Casparian strip membrane protein 4 (202 aa).

Topologically, residues 1–40 are cytoplasmic; that stretch reads MKSDSIAVDVPAESSSAIKGKAPLLGLARDHTGSGGYKRG. Residues 41–61 traverse the membrane as a helical segment; it reads LSIFDFLLRLAAIVAALAAAA. Residues 62-90 are Extracellular-facing; it reads TMGTSDETLPFFTQFLQFEASYDDLPTFQ. A helical transmembrane segment spans residues 91-111; that stretch reads FFVVAIAIVTGYLVLSLPFSV. The Cytoplasmic segment spans residues 112–130; the sequence is VTIVRPLAVAPRLLLLVLD. The chain crosses the membrane as a helical span at residues 131–151; the sequence is TAALALDTAAASAAAAIVYLA. Topologically, residues 152–176 are extracellular; that stretch reads HNGNTNTNWLPICQQFGDFCQKTSG. The chain crosses the membrane as a helical span at residues 177 to 197; it reads AVVSAFASVTFLAILVVISGV. The Cytoplasmic portion of the chain corresponds to 198–202; that stretch reads SLKRP.

It belongs to the Casparian strip membrane proteins (CASP) family. In terms of assembly, homodimer and heterodimers.

The protein resides in the cell membrane. Regulates membrane-cell wall junctions and localized cell wall deposition. Required for establishment of the Casparian strip membrane domain (CSD) and the subsequent formation of Casparian strips, a cell wall modification of the root endodermis that determines an apoplastic barrier between the intraorganismal apoplasm and the extraorganismal apoplasm and prevents lateral diffusion. In Arabidopsis lyrata subsp. lyrata (Lyre-leaved rock-cress), this protein is Casparian strip membrane protein 4.